The following is a 288-amino-acid chain: ATP synthase gamma chain (288 aa).

This sequence belongs to the ATPase gamma chain family. As to quaternary structure, F-type ATPases have 2 components, CF(1) - the catalytic core - and CF(0) - the membrane proton channel. CF(1) has five subunits: alpha(3), beta(3), gamma(1), delta(1), epsilon(1). CF(0) has three main subunits: a, b and c.

The protein localises to the cell inner membrane. Functionally, produces ATP from ADP in the presence of a proton gradient across the membrane. The gamma chain is believed to be important in regulating ATPase activity and the flow of protons through the CF(0) complex. This Rickettsia canadensis (strain McKiel) protein is ATP synthase gamma chain.